The primary structure comprises 428 residues: Histidine--tRNA ligase (428 aa).

This sequence belongs to the class-II aminoacyl-tRNA synthetase family. Homodimer.

It is found in the cytoplasm. It carries out the reaction tRNA(His) + L-histidine + ATP = L-histidyl-tRNA(His) + AMP + diphosphate + H(+). This Lactobacillus helveticus (strain DPC 4571) protein is Histidine--tRNA ligase.